Consider the following 411-residue polypeptide: Epoxyqueuosine reductase (411 aa).

Catalysis depends on Asp-171, which acts as the Proton donor. Residues 213-245 (LPLPVDKPQEEQCGRCVACMTTCPTGAIVAPYT) enclose the 4Fe-4S ferredoxin-type domain. 8 residues coordinate [4Fe-4S] cluster: Cys-225, Cys-228, Cys-231, Cys-235, Cys-251, Cys-278, Cys-281, and Cys-285.

This sequence belongs to the QueG family. In terms of assembly, monomer. Requires cob(II)alamin as cofactor. The cofactor is [4Fe-4S] cluster.

The protein resides in the cytoplasm. The catalysed reaction is epoxyqueuosine(34) in tRNA + AH2 = queuosine(34) in tRNA + A + H2O. Its pathway is tRNA modification; tRNA-queuosine biosynthesis. Catalyzes the conversion of epoxyqueuosine (oQ) to queuosine (Q), which is a hypermodified base found in the wobble positions of tRNA(Asp), tRNA(Asn), tRNA(His) and tRNA(Tyr). The sequence is that of Epoxyqueuosine reductase from Yersinia pestis.